The primary structure comprises 852 residues: MSRFFVSGYPSDSSSEEEDLLSSSEEELLSSESEEDNFSSDSEFGNDSDNDSSDSDSDGAPSGPTYFLKKDFMKGSGDGSDSDSDDEGRKVVKSAKDKLLDDMRDSIESINTAKRVGNWTNILAEFEKLGRLLIKVGQQKIGTPNFYVKCLANLEDYINETVTNEKESTKKMNATYSRAFNTVRQRVKKQIKEYQSHMDLFRTKPELFETEEPLEGIASTIAGAPQLNGDEDSNAFTSVGAKTFSPIFTTLKQISETRGKKNIDKVEQIQTLEDLLNDTSSTGTPFELISIYQMLLSIRFDASSNQSFMPIDQWKKNEADLNSFLQLLKSKSKEYQVSELGTVTDDIDIEPPANADGVKVVFGSIASLIERLDDEFTRSLQYSDPHSIEYIQRLKDESIIYKLIVKGQLYVESTTPVEIRSKHEAGQLFRIVMRRLEHIHYKPNQLIAANETEAWKNIDTNVDSTIVPRNSDPNDLVVGLADFLTQNAKSIYGKNALLCSIYYYAINNQYVKARDLFLSSHIYSTIHNSESSLQVMYNRALVQLGLSAFKAGVIEESHQALNEIANSQRLKELLGQGFNSKYPSQATTAEKQKLLPFHMHINLELLECVFMTSSLLIEIPAMAAVSSSSKDSKRKASLKSFKSKLDFHERQYFTGPPESIKDHVVHSSIALQKGDWAKAYKLLSSIKIWKLIPDNEQLLSMMKKQLQVEGLRTYIFTYKSIYTKLSIAKLSAIFDIEKESVYSIIDKMIQPGDISGSIDESKSFVNFTTNDHQRTKLQELAIVMNEKVGLLTEKNEKTASNGYSRKQPMQQQQQQQQQQQQQKEQKELLHEENNRFRYANVNANNDEFQTTA.

The segment at 1–90 is disordered; sequence MSRFFVSGYP…DSDSDDEGRK (90 aa). Residues 14–57 show a composition bias toward acidic residues; sequence SSEEEDLLSSSEEELLSSESEEDNFSSDSEFGNDSDNDSSDSDS. The 176-residue stretch at 597–772 folds into the PCI domain; it reads FHMHINLELL…SFVNFTTNDH (176 aa). Residues 798–809 are compositionally biased toward polar residues; sequence TASNGYSRKQPM. The interval 798–852 is disordered; it reads TASNGYSRKQPMQQQQQQQQQQQQQKEQKELLHEENNRFRYANVNANNDEFQTTA. A compositionally biased stretch (low complexity) spans 810-822; it reads QQQQQQQQQQQQQ. Basic and acidic residues predominate over residues 823–835; sequence KEQKELLHEENNR. Positions 841 to 852 are enriched in polar residues; the sequence is VNANNDEFQTTA.

Belongs to the eIF-3 subunit C family. As to quaternary structure, component of the eukaryotic translation initiation factor 3 (eIF-3) complex.

The protein localises to the cytoplasm. Its function is as follows. Component of the eukaryotic translation initiation factor 3 (eIF-3) complex, which is involved in protein synthesis of a specialized repertoire of mRNAs and, together with other initiation factors, stimulates binding of mRNA and methionyl-tRNAi to the 40S ribosome. The eIF-3 complex specifically targets and initiates translation of a subset of mRNAs involved in cell proliferation. This chain is Eukaryotic translation initiation factor 3 subunit C, found in Debaryomyces hansenii (strain ATCC 36239 / CBS 767 / BCRC 21394 / JCM 1990 / NBRC 0083 / IGC 2968) (Yeast).